Here is a 399-residue protein sequence, read N- to C-terminus: Formaldehyde dismutase (399 aa).

Cysteine 46 provides a ligand contact to Zn(2+). 47–51 is a binding site for NAD(+); that stretch reads GSDQH. The Zn(2+) site is built by histidine 67, cysteine 97, cysteine 100, cysteine 103, cysteine 111, and aspartate 170. NAD(+) is bound at residue threonine 174. Histidine 177 is a Zn(2+) binding site. Residues 197 to 198, 218 to 219, arginine 223, valine 263, histidine 268, proline 299, 299 to 301, and 336 to 338 each bind NAD(+); these read PV, DQ, PGI, and GMA.

It belongs to the zinc-containing alcohol dehydrogenase family. In terms of assembly, homotetramer. Zn(2+) serves as cofactor. The cofactor is NAD(+). NADH is required as a cofactor.

It carries out the reaction 2 formaldehyde + H2O = methanol + formate + H(+). With respect to regulation, inhibited by the substrate analog pyrazole but not by NAD analogs such as AMP, ADP, ATP or N-methylnicotinamide chloride. Functionally, active against a range of primary alcohols as well as some secondary alcohols. Exhibits higher activity against alcohols with longer carbon chains. This chain is Formaldehyde dismutase, found in Pseudomonas putida (Arthrobacter siderocapsulatus).